The chain runs to 475 residues: CAAX prenyl protease 1 homolog (475 aa).

Topologically, residues 1–18 are lumenal; the sequence is MGMWASVDAMWDFPAEKR. Residues 19–39 traverse the membrane as a helical segment; it reads IFGAVLLFSWTVYLWETFLAQ. The Nuclear segment spans residues 40-81; the sequence is RQRRIYKTTTRVPAELEQIMDSDTFEKSRLYQLDKSTFSFWS. A helical transmembrane segment spans residues 82–102; it reads GLYSEVEGTFILLFGGIPYLW. The Lumenal segment spans residues 103-123; the sequence is RLSGQFCSSAGFGPEYEIIQS. The helical transmembrane segment at 124 to 144 threads the bilayer; it reads LVFLLLATLFSALTGLPWSLY. The Nuclear segment spans residues 145–170; it reads NTFVIEEKHGFNHQTLEFFMKDAIKK. Residues 171–191 traverse the membrane as a helical segment; that stretch reads FIVTQCILLPVSALLLYIIKI. Topologically, residues 192 to 195 are lumenal; that stretch reads GGDY. A helical membrane pass occupies residues 196–216; it reads FFIYAWLFTLVVSLVLVTIYA. Residues 217–347 are Nuclear-facing; sequence DYIAPLFDKF…GHWKLGHTVK (131 aa). The segment at 293–314 is disordered; it reads DNQEESGMEARNEGEGDSEEVK. A compositionally biased stretch (basic and acidic residues) spans 300-314; the sequence is MEARNEGEGDSEEVK. Residue His-335 participates in Zn(2+) binding. Glu-336 is a catalytic residue. Residue His-339 participates in Zn(2+) binding. A helical transmembrane segment spans residues 348 to 368; the sequence is NIIISQMNSFLCFFLFAVLIG. Residues 369–382 lie on the Lumenal side of the membrane; it reads RRELFAAFGFYDSQ. A helical transmembrane segment spans residues 383 to 405; it reads PTLIGLLIIFQFIFSPYNEVLSF. Topologically, residues 406–475 are nuclear; the sequence is CLTVLSRRFE…LQALKNAKQD (70 aa). Glu-415 contacts Zn(2+).

This sequence belongs to the peptidase M48A family. Zn(2+) is required as a cofactor.

It is found in the endoplasmic reticulum membrane. It localises to the nucleus inner membrane. Its subcellular location is the early endosome membrane. The protein resides in the late endosome membrane. It catalyses the reaction Hydrolyzes the peptide bond -P2-(S-farnesyl or geranylgeranyl)C-P1'-P2'-P3'-COOH where P1' and P2' are amino acids with aliphatic side chains and P3' is any C-terminal residue.. Inhibited by HIV protease inhibitors, such as lopinavir, tipranavir and nelfinavir, leading to defects in lamin A/LMNA maturation and accumulation of prelamin-A/C precursors in cells. This causes defects in nuclear envelope integrity and release of DNA in the cytosol, activating the AIM2 inflammasome. Its function is as follows. Transmembrane metalloprotease whose catalytic activity is critical for processing lamin A/LMNA on the inner nuclear membrane and clearing clogged translocons on the endoplasmic reticulum. Proteolytically removes the C-terminal three residues of farnesylated proteins. Also plays an antiviral role independently of its protease activity by restricting enveloped RNA and DNA viruses. Mechanistically, controls IFITM antiviral pathway to hinder viruses from breaching the endosomal barrier by modulating membrane fluidity. The protein is CAAX prenyl protease 1 homolog of Mus musculus (Mouse).